The chain runs to 128 residues: MSKTIATENAPAAIGPYVQGVDLGSMVITSGQIPVDPKTGAVAEDVSAQARQSLENVKAIVEAAGLKVGDIVKTTVFVKDLNDFATVNATYEAFFTEHNATFPARSCVEVARLPKDVKIEIEAIAVRR.

Arginine 105 serves as a coordination point for substrate.

It belongs to the RutC family. As to quaternary structure, homotrimer.

The protein resides in the cytoplasm. The catalysed reaction is 2-iminobutanoate + H2O = 2-oxobutanoate + NH4(+). It carries out the reaction 2-iminopropanoate + H2O = pyruvate + NH4(+). The protein operates within amino-acid biosynthesis; L-isoleucine biosynthesis; 2-oxobutanoate from L-threonine. Accelerates the release of ammonia from reactive enamine/imine intermediates of the PLP-dependent threonine dehydratase (IlvA) in the low water environment of the cell. It catalyzes the deamination of enamine/imine intermediates to yield 2-ketobutyrate and ammonia. It is required for the detoxification of reactive intermediates of IlvA due to their highly nucleophilic abilities and to avoid they are captured by anthranilate phosphoribosyltransferase (TrpD) to generate PRA, an intermediate in the alternative pyrimidine biosynthetic (APB) pathway. Also required for full activity of IlvE which is involved in the isoleucine biosynthesis. RidA also accelerates the release of pyruvate produced by IlvA from L-serine. This is 2-iminobutanoate/2-iminopropanoate deaminase from Salmonella typhimurium (strain LT2 / SGSC1412 / ATCC 700720).